A 330-amino-acid polypeptide reads, in one-letter code: Diacylglycerol acyltransferase/mycolyltransferase Ag85A (330 aa).

Residues 1 to 42 form the signal peptide; sequence MKFVDRFRGAVAGMLRRLVVEAMGVALLSALIGVVGSAPAEA. Position 84–85 (84–85) interacts with substrate; it reads LR. The tract at residues 100–110 is fibronectin-binding; it reads FEWYYQSGISV. Cys129 and Cys134 are joined by a disulfide. Residues Ser168 and Asp196 each contribute to the substrate site. Ser168 (nucleophile) is an active-site residue. Glu272 is a catalytic residue. Substrate-binding positions include 274 to 277, Lys281, and 304 to 306; these read LVRT and HSW. His304 is a catalytic residue.

The protein belongs to the mycobacterial A85 antigen family. Homodimer.

The protein resides in the secreted. It is found in the cell wall. It localises to the cytoplasm. It catalyses the reaction an acyl-CoA + a 1,2-diacyl-sn-glycerol = a triacyl-sn-glycerol + CoA. It carries out the reaction 2 alpha,alpha'-trehalose 6-mycolate = alpha,alpha'-trehalose 6,6'-bismycolate + alpha,alpha-trehalose. In terms of biological role, the antigen 85 proteins (FbpA, FbpB, FbpC) are responsible for the high affinity of mycobacteria for fibronectin, a large adhesive glycoprotein, which facilitates the attachment of M.tuberculosis to murine alveolar macrophages (AMs). They also help to maintain the integrity of the cell wall by catalyzing the transfer of mycolic acids to cell wall arabinogalactan, and through the synthesis of alpha,alpha-trehalose dimycolate (TDM, cord factor). They catalyze the transfer of a mycoloyl residue from one molecule of alpha,alpha-trehalose monomycolate (TMM) to another TMM, leading to the formation of TDM. FbpA mediates triacylglycerol (TAG) formation with long-chain acyl-CoA as the acyl donor and 1,2-dipalmitoyl-sn-glycerol (1,2-dipalmitin) as the acyl acceptor. It has a preference for C26:0-CoA over C18:1-CoA. The protein is Diacylglycerol acyltransferase/mycolyltransferase Ag85A (fbpA) of Mycobacterium leprae (strain TN).